A 223-amino-acid polypeptide reads, in one-letter code: Probable transaldolase (223 aa).

The active-site Schiff-base intermediate with substrate is Lys-91.

Belongs to the transaldolase family. Type 3B subfamily.

The protein localises to the cytoplasm. It carries out the reaction D-sedoheptulose 7-phosphate + D-glyceraldehyde 3-phosphate = D-erythrose 4-phosphate + beta-D-fructose 6-phosphate. Its pathway is carbohydrate degradation; pentose phosphate pathway; D-glyceraldehyde 3-phosphate and beta-D-fructose 6-phosphate from D-ribose 5-phosphate and D-xylulose 5-phosphate (non-oxidative stage): step 2/3. Functionally, transaldolase is important for the balance of metabolites in the pentose-phosphate pathway. This chain is Probable transaldolase, found in Prosthecochloris aestuarii (strain DSM 271 / SK 413).